Here is a 589-residue protein sequence, read N- to C-terminus: Putative phospholipase B-like 2 (589 aa).

A signal peptide spans 1–41 (MVGQMYCYPGSHLARALTRALALALVLALLVGPFLSGLAGA). N-linked (GlcNAc...) asparagine glycans are attached at residues Asn-88 and Asn-110. An intrachain disulfide couples Cys-142 to Cys-152. Residues Asn-231, Asn-436, and Asn-465 are each glycosylated (N-linked (GlcNAc...) asparagine). Cys-492 and Cys-495 are joined by a disulfide. Asn-515 is a glycosylation site (N-linked (GlcNAc...) asparagine).

It belongs to the phospholipase B-like family. Interacts with IGF2R. The p76 protein is synthesized as a 80 kDa precursor which is then processed into a N-terminal 32 kDa form and a C-terminal 45 kDa form. In terms of processing, glycosylated; contains mannose 6-phosphate sugars. In terms of tissue distribution, ubiquitously expressed, with highest levels in heart, brain and liver.

It localises to the lysosome lumen. Its function is as follows. Putative phospholipase. The chain is Putative phospholipase B-like 2 (PLBD2) from Homo sapiens (Human).